The chain runs to 181 residues: HGPRTase-like protein 1 (181 aa).

It belongs to the purine/pyrimidine phosphoribosyltransferase family. Archaeal HPRT subfamily.

May catalyze a purine salvage reaction, the substrate is unknown. The protein is HGPRTase-like protein 1 of Halalkalicoccus jeotgali (strain DSM 18796 / CECT 7217 / JCM 14584 / KCTC 4019 / B3).